The following is a 762-amino-acid chain: ABC-type oligopeptide transporter ABCB9 (762 aa).

8 consecutive transmembrane segments (helical) span residues 7–27 (VVVT…IYAF), 47–67 (VLDL…ATIG), 84–104 (LVIT…LLLF), 116–136 (FWAL…LWGL), 181–201 (VAFL…ETFL), 221–241 (FTTA…AAGI), 315–335 (VFMF…FPII), and 412–432 (SGLT…HLVI). An ABC transmembrane type-1 domain is found at 184–467 (LVAASFFLIV…VGSVYSGLMQ (284 aa)). The 237-residue stretch at 500 to 736 (VDFENVTFTY…GGLYAKLVQR (237 aa)) folds into the ABC transporter domain. ATP is bound at residue 535-542 (GPSGSGKS).

Belongs to the ABC transporter superfamily. ABCB family. MHC peptide exporter (TC 3.A.1.209) subfamily. As to quaternary structure, homodimer. Interacts (via TMD0 region) with LAMP1; this interaction strongly stabilizes ABCB9 and protects ABCB9 against lysosomal degradation. Interacts (via TMD0 region) with LAMP2 (isoform LAMP-2B). Interacts (via TMD0) with YIF1B; this interaction allows (but is not essential) the ER-to-Golgi trafficking and strongly depends on a salt bridge within TMD0. Found in testis, particularly in the Sertoli cells of the seminiferous tubules. Also expressed in kidney, brain, heart, lung, spleen, thymus, intestine and testis. Higher expression detected in brain and testis than in thymus and intestine.

The protein resides in the lysosome membrane. It catalyses the reaction a [oligopeptide](in) + ATP + H2O = a [oligopeptide](out) + ADP + phosphate + H(+). In terms of biological role, ATP-dependent low-affinity peptide transporter which translocates a broad spectrum of peptides from the cytosol to the lysosomal lumen for degradation. Displays a broad peptide length specificity from 6-mer up to at least 59-mer peptides with an optimum of 23-mers. Binds and transports smaller and larger peptides with the same affinity. Favors positively charged, aromatic or hydrophobic residues in the N- and C-terminal positions whereas negatively charged residues as well as asparagine and methionine are not favored. In Rattus norvegicus (Rat), this protein is ABC-type oligopeptide transporter ABCB9.